Reading from the N-terminus, the 49-residue chain is Cytochrome b559 subunit beta (49 aa).

Residues 24–40 (WLAVHVLGVPTVFFLGA) traverse the membrane as a helical segment. His-28 contacts heme.

It belongs to the PsbE/PsbF family. Heterodimer of an alpha subunit and a beta subunit. PSII is composed of 1 copy each of membrane proteins PsbA, PsbB, PsbC, PsbD, PsbE, PsbF, PsbH, PsbI, PsbJ, PsbK, PsbL, PsbM, PsbT, PsbX, PsbY, Psb30/Ycf12, peripheral proteins PsbO, CyanoQ (PsbQ), PsbU, PsbV and a large number of cofactors. It forms dimeric complexes. The cofactor is heme b.

Its subcellular location is the cellular thylakoid membrane. In terms of biological role, this b-type cytochrome is tightly associated with the reaction center of photosystem II (PSII). PSII is a light-driven water:plastoquinone oxidoreductase that uses light energy to abstract electrons from H(2)O, generating O(2) and a proton gradient subsequently used for ATP formation. It consists of a core antenna complex that captures photons, and an electron transfer chain that converts photonic excitation into a charge separation. This Prochlorococcus marinus (strain MIT 9303) protein is Cytochrome b559 subunit beta.